A 215-amino-acid chain; its full sequence is Eukaryotic translation initiation factor 4E (215 aa).

The tract at residues 1-27 (MAERDSEPRVNIIRPDDEPEVEEERVP) is disordered. Ser207 is subject to Phosphoserine; by PKC.

Belongs to the eukaryotic initiation factor 4E family. EIF4F is a multi-subunit complex, the composition of which varies with external and internal environmental conditions. It is composed of at least eIF4A, eIF4E and eIF4G. eIF4E is also known to interact with other partners. Phosphorylation increases the ability of the protein to bind to mRNA caps and to form the eIF4F complex.

Its function is as follows. Recognizes and binds the 7-methylguanosine-containing mRNA cap during an early step in the initiation of protein synthesis and facilitates ribosome binding by inducing the unwinding of the mRNAs secondary structures. The polypeptide is Eukaryotic translation initiation factor 4E (Aplysia californica (California sea hare)).